The sequence spans 198 residues: uncharacterized protein (198 aa).

The signal sequence occupies residues 1–28; sequence MHPTQRKLMKRIILFLSLLFCIACPAIA.

The protein belongs to the fimbrial protein family.

Its subcellular location is the fimbrium. Part of the yadCKLM-htrE-yadVN fimbrial operon. Could contribute to adhesion to various surfaces in specific environmental niches. This is an uncharacterized protein from Escherichia coli (strain K12).